Consider the following 353-residue polypeptide: Protein RecA (353 aa).

Residue 65-72 (GPESSGKT) participates in ATP binding. The span at 334–345 (DAERAGAEREDN) shows a compositional bias: basic and acidic residues. A disordered region spans residues 334 to 353 (DAERAGAEREDNAAADDENF).

This sequence belongs to the RecA family.

Its subcellular location is the cytoplasm. In terms of biological role, can catalyze the hydrolysis of ATP in the presence of single-stranded DNA, the ATP-dependent uptake of single-stranded DNA by duplex DNA, and the ATP-dependent hybridization of homologous single-stranded DNAs. It interacts with LexA causing its activation and leading to its autocatalytic cleavage. This Edwardsiella ictaluri (strain 93-146) protein is Protein RecA.